Here is a 238-residue protein sequence, read N- to C-terminus: Small ribosomal subunit protein eS4 (238 aa).

Residues 38-100 enclose the S4 RNA-binding domain; it reads LPLAIVIRDV…TGEVYRVVPD (63 aa).

This sequence belongs to the eukaryotic ribosomal protein eS4 family.

This Pyrobaculum arsenaticum (strain DSM 13514 / JCM 11321 / PZ6) protein is Small ribosomal subunit protein eS4.